The sequence spans 75 residues: Sec-independent protein translocase protein TatA (75 aa).

The chain crosses the membrane as a helical span at residues 1–21 (MGSFSIWHWLIVLVIVVLVFG). Composition is skewed to basic and acidic residues over residues 43-54 (MRDSEKSGEDVQ) and 66-75 (ATDKSHTVSH). The interval 43–75 (MRDSEKSGEDVQQKIGGDTLDAQATDKSHTVSH) is disordered.

It belongs to the TatA/E family. As to quaternary structure, the Tat system comprises two distinct complexes: a TatABC complex, containing multiple copies of TatA, TatB and TatC subunits, and a separate TatA complex, containing only TatA subunits. Substrates initially bind to the TatABC complex, which probably triggers association of the separate TatA complex to form the active translocon.

It is found in the cell inner membrane. Functionally, part of the twin-arginine translocation (Tat) system that transports large folded proteins containing a characteristic twin-arginine motif in their signal peptide across membranes. TatA could form the protein-conducting channel of the Tat system. This is Sec-independent protein translocase protein TatA from Aromatoleum aromaticum (strain DSM 19018 / LMG 30748 / EbN1) (Azoarcus sp. (strain EbN1)).